The sequence spans 402 residues: Guanine nucleotide-binding protein subunit alpha-1 (402 aa).

Polar residues predominate over residues 1–12; the sequence is MGCSASKPSEPS. The disordered stretch occupies residues 1-70; the sequence is MGCSASKPSE…PEPQKPAEPA (70 aa). Gly-2 is lipidated: N-myristoyl glycine. Residue Cys-3 is the site of S-palmitoyl cysteine attachment. The segment covering 23 to 33 has biased composition (basic and acidic residues); sequence KKVEQVPEPKP. Positions 34–69 are enriched in pro residues; that stretch reads EPQPQPEPQPQPEPPKPAEPAPAPAPAPEPQKPAEP. Positions 82–402 constitute a G-alpha domain; that stretch reads EAYGLLLCGA…FISDKYYQDA (321 aa). The tract at residues 85–98 is G1 motif; sequence GLLLCGAGESGKTT. Residues Glu-93, Ser-94, Gly-95, Lys-96, Thr-97, Thr-98, Asp-198, Leu-223, Ser-229, Gly-251, Asn-317, Lys-318, Asp-320, and Ala-377 each coordinate GTP. Thr-97 serves as a coordination point for Mg(2+). The segment at 221–229 is G2 motif; that stretch reads DVLRARIRS. Ser-229 is a binding site for Mg(2+). The interval 244–253 is G3 motif; sequence IRIFDVGGQK. A G4 motif region spans residues 313–320; the sequence is FLVCNKFD. A G5 motif region spans residues 375–380; the sequence is IVALNG.

Belongs to the G-alpha family. As to quaternary structure, g proteins are composed of 3 units; alpha, beta and gamma. The alpha chain contains the guanine nucleotide binding site. It depends on Mg(2+) as a cofactor.

The protein localises to the cytoplasm. The protein resides in the perinuclear region. It is found in the endomembrane system. Functionally, guanine nucleotide-binding proteins (G proteins) are involved as modulators or transducers in various transmembrane signaling systems. This is Guanine nucleotide-binding protein subunit alpha-1 (GA1) from Trichomonas vaginalis.